We begin with the raw amino-acid sequence, 164 residues long: MKSVVTTVIAAADAAGRFPSTSDLESVQGSIQRAAARLEAAEKLANNIDAVATEAYNACIKKYPYLNNSGEANSTDTFKAKCARDIKHYLRLIQYSLVVGGTGPLDEWGIAGQREVYRALGLPTAPYVEALSFARNRGCAPRDMSAQALTEYNALLDYAINSLS.

Residues C82 and C139 each coordinate (2R,3E)-phycoerythrobilin.

The protein belongs to the phycobiliprotein family. In terms of assembly, heterodimer of an alpha and a beta chain. Post-translationally, contains two covalently linked bilin chromophores.

The protein localises to the cellular thylakoid membrane. Functionally, light-harvesting photosynthetic bile pigment-protein from the phycobiliprotein complex. In Microchaete diplosiphon (Fremyella diplosiphon), this protein is C-phycoerythrin alpha chain (cpeA).